Reading from the N-terminus, the 757-residue chain is Xaa-Pro dipeptidyl-peptidase (757 aa).

Catalysis depends on charge relay system residues serine 348, aspartate 468, and histidine 498.

Belongs to the peptidase S15 family. In terms of assembly, homodimer.

It localises to the cytoplasm. It carries out the reaction Hydrolyzes Xaa-Pro-|- bonds to release unblocked, N-terminal dipeptides from substrates including Ala-Pro-|-p-nitroanilide and (sequentially) Tyr-Pro-|-Phe-Pro-|-Gly-Pro-|-Ile.. Functionally, removes N-terminal dipeptides sequentially from polypeptides having unsubstituted N-termini provided that the penultimate residue is proline. This chain is Xaa-Pro dipeptidyl-peptidase, found in Streptococcus pneumoniae (strain ATCC 700669 / Spain 23F-1).